The chain runs to 45 residues: Sperm-specific protein Phi-3 (45 aa).

The segment at 1 to 45 (AKAKRSPRKKKAAVKKSSKSKAKKPKSPKKKKAAKKPAKKAAKKK) is disordered.

It localises to the nucleus. The protein resides in the chromosome. Involved in nuclear basic protein transition: histones are replaced by spermatid specific proteins which are themselves replaced by protamines in late spermatids. In Mytilus californianus (California mussel), this protein is Sperm-specific protein Phi-3.